The following is a 77-amino-acid chain: Large ribosomal subunit protein eL20 (77 aa).

The protein belongs to the eukaryotic ribosomal protein eL20 family. As to quaternary structure, part of the 50S ribosomal subunit. Binds 23S rRNA.

The polypeptide is Large ribosomal subunit protein eL20 (Pyrococcus horikoshii (strain ATCC 700860 / DSM 12428 / JCM 9974 / NBRC 100139 / OT-3)).